A 960-amino-acid polypeptide reads, in one-letter code: Anoctamin-1 (960 aa).

At M1–A333 the chain is on the cytoplasmic side. A disordered region spans residues T92–V115. A Phosphoserine modification is found at S196. A helical transmembrane segment spans residues W334–L354. Over Y355–N406 the chain is Extracellular. 4 disulfides stabilise this stretch: C370/C395, C379/C836, C382/C386, and C625/C630. A helical membrane pass occupies residues P407–W427. E425 provides a ligand contact to Ca(2+). The Cytoplasmic portion of the chain corresponds to K428–N493. Residues L494–Y514 form a helical membrane-spanning segment. Over R515–A542 the chain is Extracellular. The helical transmembrane segment at V543–W563 threads the bilayer. Residues L564–T581 are Cytoplasmic-facing. Residues F582–F602 traverse the membrane as a helical segment. The Extracellular segment spans residues K603 to L631. A helical membrane pass occupies residues M632–L652. The Ca(2+) site is built by N651, E654, E702, E705, E734, and D738. Residues F653–L699 are Cytoplasmic-facing. 2 helical membrane-spanning segments follow: residues T700–F720 and P721–K741. Topologically, residues F742 to G758 are cytoplasmic. Residues I759–I779 traverse the membrane as a helical segment. Residues S780–A866 are Extracellular-facing. Residue N806 is glycosylated (N-linked (GlcNAc...) asparagine). A helical membrane pass occupies residues F867 to P887. Residues D883 and D888 each coordinate Ca(2+). Residues D888 to L960 lie on the Cytoplasmic side of the membrane. A disordered region spans residues P928–L960.

Belongs to the anoctamin family. As to quaternary structure, homodimer. Interacts with CFTR. Interacts with TRPV4. In terms of tissue distribution, expressed at the apical surface of the vomeronasal epithelium (at protein level). Expressed in the lateral and septal nasal glands (at protein level). Highly expressed in pulmonary bronchiole epithelial cells, pancreatic and submandibular gland acinar cells, kidney proximal tubule, all retinal cell layers, most sensory cells of dorsal root ganglia, Leydig cells and spermatocytes (at protein level). In the dorsal root ganglia, detected in small-diameter nociceptive neurons and in larger myelinated neurons (at protein level). In the dorsal root ganglia, expressed in MrgprA3-positive neurons (at protein level). In the developing brain, highly expressed in the ventricular zone and subventricular zone at 12.5 dpc and 14.5 dpc where it is detected in radial glial cells but not in neurons with expression dramatically decreased at P1 (at protein level). Highly expressed in the endometrial stroma (at protein level). In taste buds of the vallate papillae, expressed in the apical region of type I taste cells (at protein level). In the kidney, expressed in the collecting duct (at protein level). In the retina, strongly expressed in the outer and inner plexiform layers, weakly expressed in some somata in the inner nuclear layer and ganglion cell layer and not expressed in the outer nuclear layer (at protein level). Expressed in various retinal neurons including rod bipolar cells (at protein level). Expressed in eye, brain, myometrium and endometrium with higher levels in endometrium than myometrium in estrus and day 18 pregnant mice. Not detected in uterine smooth muscle cells. Expressed at high levels in the thyroid gland and gastrointestinal muscles.

Its subcellular location is the apical cell membrane. The protein resides in the presynapse. It catalyses the reaction chloride(in) = chloride(out). Its activity is regulated as follows. ATP and calmodulin are essential for its activation. Channel activity is inhibited by CFTR protein and by chloride inhibitors such as niflumic acid (NFA) and 4,4'-diisothiocyanatostilbene-2,2'-disulfonic acid (DIDS). Activated by heat with activation seen at temperatures above 44 degrees Celsius. Activated by BDNF in radial glial cells. Functionally, calcium-activated chloride channel (CaCC). Plays a role in transepithelial anion transport and smooth muscle contraction. Required for the normal functioning of the interstitial cells of Cajal (ICCs) which generate electrical pacemaker activity in gastrointestinal smooth muscles. Acts as a major contributor to basal and stimulated chloride conductance in airway epithelial cells and plays an important role in tracheal cartilage development. Required for CFTR activation by enhancing endoplasmic reticulum Ca(2+) store release and is also required for CFTR membrane expression. Required for basal and ATP-dependent mucus secretion in airways and intestine, probably by controlling exocytosis of mucus-filled granules by providing Ca(2+) to an apical signaling compartment. Contributes to airway mucus expression induced by interleukins IL3 and IL8 and by the asthma-associated protein CLCA1 and is required for expression of mucin MUC5AC. However, was shown in another study not to be required for MUC5AC expression. Plays a role in the propagation of Ca(2+) waves in Kolliker's organ in the cochlea and contributes to the refinement of auditory brainstem circuitries prior to hearing onset. In vomeronasal sensory neurons, modulates spontaneous firing patterns in the absence of stimuli as well as the firing pattern of pheromone-evoked activity. Responsible for calcium-activated chloride channel activity in type I taste cells of the vallate papillae. Acts as a heat sensor in nociceptive neurons. In dorsal root ganglion neurons, plays a role in mediating non-histaminergic Mas-related G-protein coupled receptor (MRGPR)-dependent itching, acting as a downstream effector of MRGPRs. In the developing brain, required for the Ca(2+)-dependent process extension of radial glial cells. This is Anoctamin-1 (Ano1) from Mus musculus (Mouse).